Consider the following 317-residue polypeptide: Vacuolar arginine/histidine antiporter YPQ2 (317 aa).

Residues M1 to N13 are Vacuolar-facing. The region spanning W8–Q71 is the PQ-loop 1 domain. Residues L14 to T34 form a helical membrane-spanning segment. Residues Y35 to S39 are Cytoplasmic-facing. Residues V40–A62 form a helical membrane-spanning segment. Over K63–Q71 the chain is Vacuolar. Residues I72–V94 traverse the membrane as a helical segment. Over L95–R143 the chain is Cytoplasmic. S136 bears the Phosphoserine mark. Residues S144–L164 form a helical membrane-spanning segment. At N165 to L184 the chain is on the vacuolar side. The chain crosses the membrane as a helical span at residues G185–I205. The 63-residue stretch at G185–K247 folds into the PQ-loop 2 domain. Residues K206 to G215 lie on the Cytoplasmic side of the membrane. Residues L216–F236 traverse the membrane as a helical segment. Residues T237 to E249 are Vacuolar-facing. A helical membrane pass occupies residues F250–I270. Topologically, residues Y271 to T317 are cytoplasmic.

Belongs to the laat-1 family.

It localises to the vacuole membrane. It carries out the reaction L-histidine(out) + L-arginine(in) = L-histidine(in) + L-arginine(out). Amino acid transporter that moves arginine across the vacuolar membrane. Active during nitrogen starvation when it exports stored vacuolar arginine to the cytosol, for use as a nitrogen source. Has been shown to function as an arginine/histidine antiporter when substrate is present on both sides of the membrane, but may also function as a uniporter. The sequence is that of Vacuolar arginine/histidine antiporter YPQ2 (YPQ2) from Saccharomyces cerevisiae (strain ATCC 204508 / S288c) (Baker's yeast).